Reading from the N-terminus, the 512-residue chain is Probable pectinesterase/pectinesterase inhibitor 54 (512 aa).

The first 24 residues, 1-24, serve as a signal peptide directing secretion; that stretch reads MGVIDMVLFWVLLVNALLIVDASS. The interval 29–193 is pectinesterase inhibitor 54; that stretch reads FAYQNEMQRH…SRLVSNSLTL (165 aa). 2 N-linked (GlcNAc...) asparagine glycosylation sites follow: Asn71 and Asn131. Residues 229-496 are pectinesterase 54; the sequence is HVVVAKDGSG…FSVVKRRNGE (268 aa). Residue Gln302 participates in substrate binding. The active-site Proton donor; for pectinesterase activity is the Asp325. Cys339 and Cys359 are disulfide-bonded. The Nucleophile; for pectinesterase activity role is filled by Asp346. Substrate is bound by residues Arg415 and Trp417.

It in the N-terminal section; belongs to the PMEI family. This sequence in the C-terminal section; belongs to the pectinesterase family. As to expression, expressed in siliques.

Its subcellular location is the secreted. The protein resides in the cell wall. The catalysed reaction is [(1-&gt;4)-alpha-D-galacturonosyl methyl ester](n) + n H2O = [(1-&gt;4)-alpha-D-galacturonosyl](n) + n methanol + n H(+). It functions in the pathway glycan metabolism; pectin degradation; 2-dehydro-3-deoxy-D-gluconate from pectin: step 1/5. Acts in the modification of cell walls via demethylesterification of cell wall pectin. This Arabidopsis thaliana (Mouse-ear cress) protein is Probable pectinesterase/pectinesterase inhibitor 54 (PME54).